A 313-amino-acid chain; its full sequence is Porphobilinogen deaminase (313 aa).

At C242 the chain carries S-(dipyrrolylmethanemethyl)cysteine.

The protein belongs to the HMBS family. As to quaternary structure, monomer. Requires dipyrromethane as cofactor.

It catalyses the reaction 4 porphobilinogen + H2O = hydroxymethylbilane + 4 NH4(+). It functions in the pathway porphyrin-containing compound metabolism; protoporphyrin-IX biosynthesis; coproporphyrinogen-III from 5-aminolevulinate: step 2/4. Tetrapolymerization of the monopyrrole PBG into the hydroxymethylbilane pre-uroporphyrinogen in several discrete steps. The protein is Porphobilinogen deaminase of Yersinia pseudotuberculosis serotype O:3 (strain YPIII).